A 323-amino-acid polypeptide reads, in one-letter code: Mas-related G-protein coupled receptor member X1 (323 aa).

Residues 1–30 lie on the Extracellular side of the membrane; that stretch reads MDPTISSLSTESTTLNKTGHPSCRPILTLS. A glycan (N-linked (GlcNAc...) asparagine) is linked at Asn-16. A helical transmembrane segment spans residues 31-51; that stretch reads FLVPIITLLGLAGNTIVLWLL. Over 52-59 the chain is Cytoplasmic; sequence GFRMRRKA. A helical membrane pass occupies residues 60-80; sequence ISVYVLNLSLADSFFLCCHFI. The Extracellular segment spans residues 81 to 100; that stretch reads DSLMRIMNFYGIYAHKLSKE. The chain crosses the membrane as a helical span at residues 101-121; that stretch reads ILGNAAIIPYISGLSILSAIS. The Cytoplasmic portion of the chain corresponds to 122-143; that stretch reads TERCLSVLWPIWYHCHRPRNMS. A helical transmembrane segment spans residues 144-164; sequence AIICVLIWVLSFLMGILDWFF. At 165–180 the chain is on the extracellular side; the sequence is SGFLGETHHHLWKNVD. Residues 181-201 form a helical membrane-spanning segment; that stretch reads FIVTAFLIFLFMLLFGSSLAL. The Cytoplasmic segment spans residues 202–226; it reads LVRILCGSRRKPLSRLYVTISLTVM. The chain crosses the membrane as a helical span at residues 227–247; the sequence is VYLICGLPLGLYLFLLYWFGI. Over 248-258 the chain is Extracellular; it reads HLHYPFCHIYQ. The helical transmembrane segment at 259–279 threads the bilayer; it reads VTVLLSCVNSSANPIIYFLVG. The Cytoplasmic segment spans residues 280–323; that stretch reads SFRHRKKHRSLKMVLKRALEETPEEDEYTDSHVQKPTEISERRC.

It belongs to the G-protein coupled receptor 1 family. Mas subfamily. In terms of tissue distribution, uniquely localized in a subset of small dorsal root and trigeminal sensory neurons. Associated preferentially with IB4 class of small-diameter somatosensory afferents (also known as nociceptors).

Its subcellular location is the cell membrane. Orphan receptor activated by neuropeptides terminating in Arg-Phe or Arg-Phe-amide. Mediates its action by association with G proteins that activate a phosphatidylinositol-calcium second messenger system. Its effect is mediated by G(q) and G(11) proteins. May regulate the function of nociceptive neurons by modulation of pain perception. In Rattus norvegicus (Rat), this protein is Mas-related G-protein coupled receptor member X1 (Mrgprx1).